Here is a 53-residue protein sequence, read N- to C-terminus: MRNKAHNFPNQNNNKLEGEPRAKAEYASKRADGTTNTHPQERMRASGERSDFF.

Residues 1–53 (MRNKAHNFPNQNNNKLEGEPRAKAEYASKRADGTTNTHPQERMRASGERSDFF) are disordered. 2 stretches are compositionally biased toward basic and acidic residues: residues 16–32 (LEGEPRAKAEYASKRAD) and 39–53 (PQERMRASGERSDFF).

The protein belongs to the SspK family.

The protein resides in the spore core. The chain is Small, acid-soluble spore protein K from Geobacillus kaustophilus (strain HTA426).